The sequence spans 64 residues: Large ribosomal subunit protein bL35 (64 aa).

It belongs to the bacterial ribosomal protein bL35 family.

The sequence is that of Large ribosomal subunit protein bL35 from Shewanella oneidensis (strain ATCC 700550 / JCM 31522 / CIP 106686 / LMG 19005 / NCIMB 14063 / MR-1).